A 265-amino-acid polypeptide reads, in one-letter code: 5'-nucleotidase SurE (265 aa).

Residues D11, D12, S43, and N101 each contribute to the a divalent metal cation site.

This sequence belongs to the SurE nucleotidase family. It depends on a divalent metal cation as a cofactor.

The protein resides in the cytoplasm. The catalysed reaction is a ribonucleoside 5'-phosphate + H2O = a ribonucleoside + phosphate. Nucleotidase that shows phosphatase activity on nucleoside 5'-monophosphates. This chain is 5'-nucleotidase SurE, found in Synechococcus sp. (strain CC9311).